A 656-amino-acid polypeptide reads, in one-letter code: Pentatricopeptide repeat-containing protein At1g62260, mitochondrial (656 aa).

15 PPR repeats span residues 70–104 (NTVT…DVVT), 105–134 (WNTM…MPSR), 135–169 (DSFS…NAVS), 170–200 (WSAM…DSSP), 203–227 (ALVA…YGSL), 234–264 (LVYA…IPDL), 280–310 (NVVS…MKDR), 311–345 (DTIS…DAHS), 346–372 (WNMM…TPEK), 373–407 (HTVS…GEKP), 408–438 (DPHT…VVKT), 442–472 (DVPV…MKLK), 474–508 (EVIT…GIYP), 509–544 (SHIT…KIEP), and 545–575 (QMEH…MPFE). The interval 580-655 (VWGALLDACR…ERGSSWVDSS (76 aa)) is type E motif.

Belongs to the PPR family. PCMP-E subfamily.

It is found in the mitochondrion. The polypeptide is Pentatricopeptide repeat-containing protein At1g62260, mitochondrial (PCMP-E10) (Arabidopsis thaliana (Mouse-ear cress)).